The following is a 241-amino-acid chain: Bidirectional sugar transporter SWEET17 (241 aa).

Topologically, residues 1–3 (MAE) are vacuolar. A helical membrane pass occupies residues 4 to 24 (ASFYIGVIGNVISVLVFLSPV). The MtN3/slv 1 domain occupies 6–92 (FYIGVIGNVI…SLFLFYAPRH (87 aa)). At 25-41 (ETFWKIVKRRSTEEYKS) the chain is on the cytoplasmic side. A helical membrane pass occupies residues 42 to 62 (LPYICTLLGSSLWTYYGIVTP). Topologically, residues 63–69 (GEYLVST) are vacuolar. A helical transmembrane segment spans residues 70–90 (VNGFGALVETIYVSLFLFYAP). Residues 91–94 (RHLK) lie on the Cytoplasmic side of the membrane. A helical membrane pass occupies residues 95–115 (LKTVDVDAMLNVFFPIAAIVA). Residues 116–128 (TRSAFEDEKMRSQ) lie on the Vacuolar side of the membrane. A helical membrane pass occupies residues 129 to 149 (SIGFISAGLNIIMYGSPLSAM). A MtN3/slv 2 domain is found at 129-212 (SIGFISAGLN…LILYGIYRNA (84 aa)). Over 150-161 (KTVVTTKSVKYM) the chain is Cytoplasmic. A helical transmembrane segment spans residues 162–182 (PFWLSFFLFLNGAIWAVYALL). Residues 183-185 (QHD) lie on the Vacuolar side of the membrane. Residues 186-206 (VFLLVPNGVGFVFGTMQLILY) traverse the membrane as a helical segment. Residues 207-241 (GIYRNAKPVGLSNGLSEIAQDEEEGLTSRVEPLLS) lie on the Cytoplasmic side of the membrane.

This sequence belongs to the SWEET sugar transporter family. As to quaternary structure, forms homooligomers and heterooligomers with SWEET1, SWEET2, SWEET3, SWEET4, SWEET6, SWEET7, SWEET8, SWEET9, SWEET11, SWEET12, SWEET13, SWEET15 and SWEET16. In terms of tissue distribution, expressed in leaves at low levels, mostly in xylem and parenchyma. Highly expressed in the cortex of roots, predominantly in tips and mature regions, especially in tonoplasts. Also accumulates in cotyledons, stems, flowers, and siliques.

It localises to the vacuole membrane. In terms of biological role, acts as a vacuolar hexose transporter. Regulates fructose (Fru) homeostasis in leaves and roots by exporting/importing Fru through the tonoplast regarding metabolic demand. The chain is Bidirectional sugar transporter SWEET17 from Arabidopsis thaliana (Mouse-ear cress).